The sequence spans 154 residues: Egg-lysin (154 aa).

Residues 1–18 (MKLLVLCIFAMMATLAMS) form the signal peptide.

In terms of assembly, homodimer. In terms of tissue distribution, sperm.

Its function is as follows. Dissolves the egg vitelline layer nonenzymatically during fertilization. It creates a hole of about 3 mu-m in diameter through which the sperm pass. The polypeptide is Egg-lysin (Haliotis sorenseni (White abalone)).